Reading from the N-terminus, the 327-residue chain is Germination protease (327 aa).

Positions Met1 to Asp7 are excised as a propeptide.

The protein belongs to the peptidase A25 family. In terms of assembly, homotetramer. Autoproteolytically processed. The inactive tetrameric zymogen termed p46 autoprocesses to a smaller form termed p41, which is active only during spore germination.

The catalysed reaction is Endopeptidase action with P4 Glu or Asp, P1 preferably Glu &gt; Asp, P1' hydrophobic and P2' Ala.. Initiates the rapid degradation of small, acid-soluble proteins during spore germination. The protein is Germination protease of Clostridium acetobutylicum (strain ATCC 824 / DSM 792 / JCM 1419 / IAM 19013 / LMG 5710 / NBRC 13948 / NRRL B-527 / VKM B-1787 / 2291 / W).